The chain runs to 325 residues: Glutarate 2-hydroxylase (325 aa).

The Fe cation site is built by H160, D162, and H292.

Belongs to the glutarate hydroxylase family. Homotetramer. It depends on Fe(2+) as a cofactor.

The catalysed reaction is glutarate + 2-oxoglutarate + O2 = (S)-2-hydroxyglutarate + succinate + CO2. It functions in the pathway amino-acid degradation. Its function is as follows. Acts as an alpha-ketoglutarate-dependent dioxygenase catalyzing hydroxylation of glutarate (GA) to L-2-hydroxyglutarate (L2HG). Functions in a L-lysine degradation pathway that proceeds via cadaverine, glutarate and L-2-hydroxyglutarate. The polypeptide is Glutarate 2-hydroxylase (Pseudomonas putida (strain GB-1)).